The primary structure comprises 638 residues: Neuroendocrine convertase 2 (638 aa).

The first 25 residues, 1-25 (MRGGCISQGKAAAGLLFCVMVFASA), serve as a signal peptide directing secretion. Positions 26-109 (ERPVFTNHFL…QQEGFNRKKR (84 aa)) are excised as a propeptide. Residues 129–453 (QWYLINTGQA…YGVLDAGAMV (325 aa)) enclose the Peptidase S8 domain. Residues D167 and H208 each act as charge relay system in the active site. 2 disulfides stabilise this stretch: C225-C376 and C317-C347. N375 carries an N-linked (GlcNAc...) asparagine glycan. The Charge relay system role is filled by S384. Residues 461–597 (TVPERFHCVG…TLMLHGTQSA (137 aa)) enclose the P/Homo B domain. An intrachain disulfide couples C468 to C494. Residues N514 and N524 are each glycosylated (N-linked (GlcNAc...) asparagine).

Belongs to the peptidase S8 family. Furin subfamily.

It localises to the cytoplasmic vesicle. The protein resides in the secretory vesicle. It is found in the secreted. The enzyme catalyses Release of protein hormones and neuropeptides from their precursors, generally by hydrolysis of -Lys-Arg-|- bonds.. Serine endopeptidase which is involved in the processing of hormone and other protein precursors at sites comprised of pairs of basic amino acid residues. Responsible for the release of glucagon from proglucagon in pancreatic A cells. This is Neuroendocrine convertase 2 (PCSK2) from Bos taurus (Bovine).